The sequence spans 594 residues: Protein FAM200C (594 aa).

This chain is Protein FAM200C (FAM200C), found in Bos taurus (Bovine).